Here is a 354-residue protein sequence, read N- to C-terminus: F-box/kelch-repeat protein At1g80440 (354 aa).

Residues 2-49 (ELIPNLPDDVARECLLRSSYQQFPVIASVCRAWNREVSLSQFLHQRKA) form the F-box domain. Kelch repeat units follow at residues 63–110 (RVDP…CRLV), 115–163 (DLIV…ASDS), 166–213 (TVLV…FHAG), and 215–263 (FHVI…PPTC).

This is F-box/kelch-repeat protein At1g80440 from Arabidopsis thaliana (Mouse-ear cress).